The primary structure comprises 1121 residues: RecBCD enzyme subunit RecC (1121 aa).

It belongs to the RecC family. Heterotrimer of RecB, RecC and RecD. All subunits contribute to DNA-binding.

In terms of biological role, a helicase/nuclease that prepares dsDNA breaks (DSB) for recombinational DNA repair. Binds to DSBs and unwinds DNA via a highly rapid and processive ATP-dependent bidirectional helicase activity. Unwinds dsDNA until it encounters a Chi (crossover hotspot instigator) sequence from the 3' direction. Cuts ssDNA a few nucleotides 3' to the Chi site. The properties and activities of the enzyme are changed at Chi. The Chi-altered holoenzyme produces a long 3'-ssDNA overhang and facilitates RecA-binding to the ssDNA for homologous DNA recombination and repair. Holoenzyme degrades any linearized DNA that is unable to undergo homologous recombination. In the holoenzyme this subunit recognizes the wild-type Chi sequence, and when added to isolated RecB increases its ATP-dependent helicase processivity. This is RecBCD enzyme subunit RecC from Haemophilus influenzae (strain ATCC 51907 / DSM 11121 / KW20 / Rd).